An 801-amino-acid polypeptide reads, in one-letter code: Cadherin-20 (801 aa).

An N-terminal signal peptide occupies residues 1-34 (MWTSGRMSNAKNWLGLGMSLYFWGLMDLTTTVLS). The propeptide occupies 35 to 59 (DTPTPQGELEALLSDKPQSHQRTKR). Topologically, residues 60–619 (SWVWNQFFVL…AYMLPVSLSR (560 aa)) are extracellular. Cadherin domains follow at residues 61-165 (WVWN…EPKF), 166-274 (LDGP…PPRF), 275-389 (PQKH…PPVF), 390-494 (EPGF…APEF), and 494-610 (FPRF…SPEA). An N-linked (GlcNAc...) asparagine glycan is attached at asparagine 261. Asparagine 420, asparagine 461, and asparagine 542 each carry an N-linked (GlcNAc...) asparagine glycan. A helical transmembrane segment spans residues 620–640 (GALIAILACIFVLLVLVLLIL). At 641–801 (SMRRHRKQPY…GASEGPAPLW (161 aa)) the chain is on the cytoplasmic side.

As to expression, expressed in placenta, adult brain, and fetal brain.

It localises to the cell membrane. Functionally, cadherins are calcium-dependent cell adhesion proteins. They preferentially interact with themselves in a homophilic manner in connecting cells; cadherins may thus contribute to the sorting of heterogeneous cell types. In Homo sapiens (Human), this protein is Cadherin-20 (CDH20).